The primary structure comprises 557 residues: Probable asparagine synthetase [glutamine-hydrolyzing] (557 aa).

Cys-2 acts as the For GATase activity in catalysis. One can recognise a Glutamine amidotransferase type-2 domain in the interval 2–188; that stretch reads CGILAVHHVA…PGHYYDSETK (187 aa). L-glutamine is bound by residues 50–54, 75–77, and Asp-99; these read RLAIV and NGE. The 336-residue stretch at 196–531 folds into the Asparagine synthetase domain; the sequence is PSWWDENKIP…PRQCADTVMR (336 aa). ATP contacts are provided by residues Leu-235, Ile-280, and 354 to 355; that span reads SG. Phosphoserine is present on residues Ser-391 and Ser-489.

It localises to the cytoplasm. The protein resides in the nucleus. The catalysed reaction is L-aspartate + L-glutamine + ATP + H2O = L-asparagine + L-glutamate + AMP + diphosphate + H(+). The protein operates within amino-acid biosynthesis; L-asparagine biosynthesis; L-asparagine from L-aspartate (L-Gln route): step 1/1. The polypeptide is Probable asparagine synthetase [glutamine-hydrolyzing] (asn1) (Schizosaccharomyces pombe (strain 972 / ATCC 24843) (Fission yeast)).